The chain runs to 510 residues: Ankyrin repeat domain-containing protein 13C-A (510 aa).

Over residues 1 to 19 (MTGEKIRSLHKDQKPSKDE) the composition is skewed to basic and acidic residues. Residues 1-35 (MTGEKIRSLHKDQKPSKDEDLLEPDEEATAGGTFT) form a disordered region. ANK repeat units lie at residues 80 to 111 (DVYF…QKDS), 112 to 141 (HGNT…PVKV), and 145 to 174 (QGWS…QQSR).

It is found in the endoplasmic reticulum membrane. Its function is as follows. Acts as a molecular chaperone for G protein-coupled receptors, regulating their biogenesis and exit from the ER. In Xenopus laevis (African clawed frog), this protein is Ankyrin repeat domain-containing protein 13C-A (ankrd13c-a).